The following is a 402-amino-acid chain: MNEFPVVLVINCGSSSIKFSVLDVATCDVLMAGIADGMNTENAFLSINGDKPINLAHSNYEDALKAIAFELEKRDLTDSVALIGHRIAHGGELFTQSVIITDEIIDNIRRVSPLAPLHNYANLSGIDAARHLFPAVRQVAVFDTSFHQTLAPEAYLYGLPWEYFSSLGVRRYGFHGTSHRYVSRRAYELLDLDEKDSGLIVAHLGNGASICAVRNGQSVDTSMGMTPLEGLMMGTRSGDVDFGAMAWIAKETGQTLSDLERVVNKESGLLGISGLSSDLRVLEKAWHEGHERARLAIKTFVHRIARHIAGHAASLHRLDGIIFTGGIGENSVLIRQLVIEHLGVLGLTLDVEMNKQPNSHGERIISANPSQVICAVIPTNEEKMIALDAIHLGNVKAPVEFA.

ATP is bound by residues asparagine 11 and lysine 18. Asparagine 11 provides a ligand contact to Mg(2+). Arginine 86 contributes to the substrate binding site. Residue aspartate 143 is the Proton donor/acceptor of the active site. ATP contacts are provided by residues histidine 175, 203 to 207 (HLGNG), 278 to 280 (DLR), and 326 to 330 (GIGEN).

Belongs to the acetokinase family. TdcD subfamily. As to quaternary structure, homodimer. Mg(2+) serves as cofactor.

It carries out the reaction propanoate + ATP = propanoyl phosphate + ADP. The protein operates within amino-acid degradation; L-threonine degradation via propanoate pathway; propanoate from L-threonine: step 4/4. Functionally, catalyzes the conversion of propionyl phosphate and ADP to propionate and ATP. In Salmonella typhimurium (strain D23580), this protein is Propionate kinase.